A 90-amino-acid chain; its full sequence is Acylphosphatase (90 aa).

The region spanning 5 to 90 (CERFIVKGHV…YKPFRGFKIL (86 aa)) is the Acylphosphatase-like domain. Residues arginine 20 and asparagine 38 contribute to the active site.

Belongs to the acylphosphatase family.

It carries out the reaction an acyl phosphate + H2O = a carboxylate + phosphate + H(+). The polypeptide is Acylphosphatase (acyP) (Vibrio parahaemolyticus serotype O3:K6 (strain RIMD 2210633)).